The sequence spans 278 residues: Release factor glutamine methyltransferase (278 aa).

S-adenosyl-L-methionine is bound by residues 120–124, D143, and N184; that span reads GTGTG. 184–187 contributes to the substrate binding site; it reads NPPY.

The protein belongs to the protein N5-glutamine methyltransferase family. PrmC subfamily.

The catalysed reaction is L-glutaminyl-[peptide chain release factor] + S-adenosyl-L-methionine = N(5)-methyl-L-glutaminyl-[peptide chain release factor] + S-adenosyl-L-homocysteine + H(+). Methylates the class 1 translation termination release factors RF1/PrfA and RF2/PrfB on the glutamine residue of the universally conserved GGQ motif. This is Release factor glutamine methyltransferase from Deinococcus radiodurans (strain ATCC 13939 / DSM 20539 / JCM 16871 / CCUG 27074 / LMG 4051 / NBRC 15346 / NCIMB 9279 / VKM B-1422 / R1).